We begin with the raw amino-acid sequence, 408 residues long: Putative ankyrin repeat protein L483 (408 aa).

ANK repeat units lie at residues 78–107 (SLNK…DIKA), 108–137 (GDDC…NIRA), 139–167 (NDYA…DIRA), 168–197 (NNDY…NIRT), 198–227 (ENDY…DIRA), 229–257 (NDYA…NIRV), 259–287 (NDYA…NIRA), 288–317 (RCDF…DIRS), 318–347 (QNDY…DIRT), 349–377 (DDYA…NIRA), and 378–407 (KDDY…VLTK).

The protein is Putative ankyrin repeat protein L483 of Acanthamoeba polyphaga (Amoeba).